Reading from the N-terminus, the 362-residue chain is UDP-N-acetylglucosamine--N-acetylmuramyl-(pentapeptide) pyrophosphoryl-undecaprenol N-acetylglucosamine transferase (362 aa).

Residues 10–12, asparagine 124, arginine 161, serine 195, and glutamine 291 contribute to the UDP-N-acetyl-alpha-D-glucosamine site; that span reads TAG.

This sequence belongs to the glycosyltransferase 28 family. MurG subfamily.

It is found in the cell membrane. The enzyme catalyses di-trans,octa-cis-undecaprenyl diphospho-N-acetyl-alpha-D-muramoyl-L-alanyl-D-glutamyl-meso-2,6-diaminopimeloyl-D-alanyl-D-alanine + UDP-N-acetyl-alpha-D-glucosamine = di-trans,octa-cis-undecaprenyl diphospho-[N-acetyl-alpha-D-glucosaminyl-(1-&gt;4)]-N-acetyl-alpha-D-muramoyl-L-alanyl-D-glutamyl-meso-2,6-diaminopimeloyl-D-alanyl-D-alanine + UDP + H(+). Its pathway is cell wall biogenesis; peptidoglycan biosynthesis. Cell wall formation. Catalyzes the transfer of a GlcNAc subunit on undecaprenyl-pyrophosphoryl-MurNAc-pentapeptide (lipid intermediate I) to form undecaprenyl-pyrophosphoryl-MurNAc-(pentapeptide)GlcNAc (lipid intermediate II). The polypeptide is UDP-N-acetylglucosamine--N-acetylmuramyl-(pentapeptide) pyrophosphoryl-undecaprenol N-acetylglucosamine transferase (Streptomyces collinus).